We begin with the raw amino-acid sequence, 467 residues long: Acid phosphatase PHO12 (467 aa).

The N-terminal stretch at Met-1 to Ala-17 is a signal peptide. The active-site Nucleophile is His-75. N-linked (GlcNAc...) asparagine glycosylation is found at Asn-97, Asn-162, Asn-192, Asn-250, and Asn-315. Catalysis depends on Asp-338, which acts as the Proton donor. 5 N-linked (GlcNAc...) asparagine glycosylation sites follow: Asn-356, Asn-390, Asn-439, Asn-445, and Asn-461.

Belongs to the histidine acid phosphatase family. Glycosylated during secretion across the membrane.

It carries out the reaction a phosphate monoester + H2O = an alcohol + phosphate. This chain is Acid phosphatase PHO12 (PHO12), found in Saccharomyces cerevisiae (strain ATCC 204508 / S288c) (Baker's yeast).